The sequence spans 284 residues: uncharacterized protein (284 aa).

It belongs to the methyltransferase superfamily.

The protein resides in the cytoplasm. It is found in the nucleus. Probable methyltransferase. This is an uncharacterized protein from Schizosaccharomyces pombe (strain 972 / ATCC 24843) (Fission yeast).